A 79-amino-acid chain; its full sequence is Acyl carrier protein (79 aa).

Positions Ser-2–Thr-77 constitute a Carrier domain. Ser-37 is subject to O-(pantetheine 4'-phosphoryl)serine.

Belongs to the acyl carrier protein (ACP) family. In terms of processing, 4'-phosphopantetheine is transferred from CoA to a specific serine of apo-ACP by AcpS. This modification is essential for activity because fatty acids are bound in thioester linkage to the sulfhydryl of the prosthetic group.

It is found in the cytoplasm. Its pathway is lipid metabolism; fatty acid biosynthesis. Carrier of the growing fatty acid chain in fatty acid biosynthesis. This is Acyl carrier protein from Rhodospirillum centenum (strain ATCC 51521 / SW).